A 216-amino-acid polypeptide reads, in one-letter code: DNA-directed RNA polymerase subunit alpha (216 aa).

The protein belongs to the RNA polymerase alpha chain family. In plastids the minimal PEP RNA polymerase catalytic core is composed of four subunits: alpha, beta, beta', and beta''. When a (nuclear-encoded) sigma factor is associated with the core the holoenzyme is formed, which can initiate transcription.

The protein resides in the plastid. The protein localises to the chloroplast. The catalysed reaction is RNA(n) + a ribonucleoside 5'-triphosphate = RNA(n+1) + diphosphate. Functionally, DNA-dependent RNA polymerase catalyzes the transcription of DNA into RNA using the four ribonucleoside triphosphates as substrates. The polypeptide is DNA-directed RNA polymerase subunit alpha (rpoA) (Euglena granulata).